We begin with the raw amino-acid sequence, 60 residues long: Homeobox protein EgHBX4 (60 aa).

Positions 1-60 (SRRERTIYTPEQLEAMEEVFGVNRYPDVSMREELASRLGINESKIQVWFKNRRAKLRNLE) form a DNA-binding region, homeobox.

It belongs to the paired homeobox family. Bicoid subfamily.

The protein resides in the nucleus. This is Homeobox protein EgHBX4 (HBX4) from Echinococcus granulosus (Hydatid tapeworm).